The primary structure comprises 92 residues: Translation initiation factor IF-1 (92 aa).

The region spanning 1–72 (MAKEELIQFE…EKGRLIFRHK (72 aa)) is the S1-like domain. Positions 69–92 (FRHKDERPGGPPRSGPPRGQFRRR) are disordered.

Belongs to the IF-1 family. As to quaternary structure, component of the 30S ribosomal translation pre-initiation complex which assembles on the 30S ribosome in the order IF-2 and IF-3, IF-1 and N-formylmethionyl-tRNA(fMet); mRNA recruitment can occur at any time during PIC assembly.

It localises to the cytoplasm. In terms of biological role, one of the essential components for the initiation of protein synthesis. Stabilizes the binding of IF-2 and IF-3 on the 30S subunit to which N-formylmethionyl-tRNA(fMet) subsequently binds. Helps modulate mRNA selection, yielding the 30S pre-initiation complex (PIC). Upon addition of the 50S ribosomal subunit IF-1, IF-2 and IF-3 are released leaving the mature 70S translation initiation complex. The protein is Translation initiation factor IF-1 of Rhodopseudomonas palustris (strain ATCC BAA-98 / CGA009).